The primary structure comprises 92 residues: MTRSLKKNPFVANHLLRKINKLNTKAEKDIIITWSRASTIIPTMIGHTIAIHNGKEHLPIYITDRMVGHKLGEFSPTLNFRGHAKNDNRSRR.

It belongs to the universal ribosomal protein uS19 family.

Its subcellular location is the plastid. The protein localises to the chloroplast. Functionally, protein S19 forms a complex with S13 that binds strongly to the 16S ribosomal RNA. This chain is Small ribosomal subunit protein uS19c (rps19), found in Glycine max (Soybean).